The sequence spans 180 residues: Cytidylate kinase (180 aa).

Position 7–15 (7–15 (GPPGSGKST)) interacts with ATP.

The protein belongs to the cytidylate kinase family. Type 2 subfamily.

The protein resides in the cytoplasm. The catalysed reaction is CMP + ATP = CDP + ADP. The enzyme catalyses dCMP + ATP = dCDP + ADP. The protein is Cytidylate kinase of Sulfurisphaera tokodaii (strain DSM 16993 / JCM 10545 / NBRC 100140 / 7) (Sulfolobus tokodaii).